Consider the following 110-residue polypeptide: Small ribosomal subunit protein bS16 (110 aa).

Positions 79–110 (AAGVKKREARNNPQKAVPRKERKAQAEAAAKG) are disordered.

It belongs to the bacterial ribosomal protein bS16 family.

The protein is Small ribosomal subunit protein bS16 of Bradyrhizobium diazoefficiens (strain JCM 10833 / BCRC 13528 / IAM 13628 / NBRC 14792 / USDA 110).